Here is a 226-residue protein sequence, read N- to C-terminus: Lipoprotein-releasing system ATP-binding protein LolD (226 aa).

The ABC transporter domain occupies 6–226; sequence IELKSVERHY…TLADGKVVPL (221 aa). 42–49 serves as a coordination point for ATP; it reads APSGTGKS.

Belongs to the ABC transporter superfamily. Lipoprotein translocase (TC 3.A.1.125) family. As to quaternary structure, the complex is composed of two ATP-binding proteins (LolD) and two transmembrane proteins (LolC and LolE).

Its subcellular location is the cell inner membrane. Part of the ABC transporter complex LolCDE involved in the translocation of mature outer membrane-directed lipoproteins, from the inner membrane to the periplasmic chaperone, LolA. Responsible for the formation of the LolA-lipoprotein complex in an ATP-dependent manner. The chain is Lipoprotein-releasing system ATP-binding protein LolD from Mesorhizobium japonicum (strain LMG 29417 / CECT 9101 / MAFF 303099) (Mesorhizobium loti (strain MAFF 303099)).